The chain runs to 443 residues: Glutamate--tRNA ligase 1 (443 aa).

A 'HIGH' region motif is present at residues 10–20 (PSPTGYIHVGN). Positions 241-245 (ALSKR) match the 'KMSKS' region motif. Lys244 is an ATP binding site.

It belongs to the class-I aminoacyl-tRNA synthetase family. Glutamate--tRNA ligase type 1 subfamily. As to quaternary structure, monomer.

The protein localises to the cytoplasm. The catalysed reaction is tRNA(Glu) + L-glutamate + ATP = L-glutamyl-tRNA(Glu) + AMP + diphosphate. In terms of biological role, catalyzes the attachment of glutamate to tRNA(Glu) in a two-step reaction: glutamate is first activated by ATP to form Glu-AMP and then transferred to the acceptor end of tRNA(Glu). In Ruegeria pomeroyi (strain ATCC 700808 / DSM 15171 / DSS-3) (Silicibacter pomeroyi), this protein is Glutamate--tRNA ligase 1.